Reading from the N-terminus, the 156-residue chain is ATP synthase subunit b 1 (156 aa).

A helical membrane pass occupies residues 7–27 (LFLQAIVFAILVWFTMKFVWP).

It belongs to the ATPase B chain family. As to quaternary structure, F-type ATPases have 2 components, F(1) - the catalytic core - and F(0) - the membrane proton channel. F(1) has five subunits: alpha(3), beta(3), gamma(1), delta(1), epsilon(1). F(0) has three main subunits: a(1), b(2) and c(10-14). The alpha and beta chains form an alternating ring which encloses part of the gamma chain. F(1) is attached to F(0) by a central stalk formed by the gamma and epsilon chains, while a peripheral stalk is formed by the delta and b chains.

Its subcellular location is the cell inner membrane. Functionally, f(1)F(0) ATP synthase produces ATP from ADP in the presence of a proton or sodium gradient. F-type ATPases consist of two structural domains, F(1) containing the extramembraneous catalytic core and F(0) containing the membrane proton channel, linked together by a central stalk and a peripheral stalk. During catalysis, ATP synthesis in the catalytic domain of F(1) is coupled via a rotary mechanism of the central stalk subunits to proton translocation. In terms of biological role, component of the F(0) channel, it forms part of the peripheral stalk, linking F(1) to F(0). The polypeptide is ATP synthase subunit b 1 (Albidiferax ferrireducens (strain ATCC BAA-621 / DSM 15236 / T118) (Rhodoferax ferrireducens)).